A 448-amino-acid chain; its full sequence is Argininosuccinate synthase (448 aa).

ATP contacts are provided by residues 17 to 25 (AFSGGLDTS) and alanine 43. Tyrosine 99 serves as a coordination point for L-citrulline. 2 residues coordinate ATP: glycine 129 and threonine 131. L-aspartate contacts are provided by threonine 131, asparagine 135, and aspartate 136. Asparagine 135 provides a ligand contact to L-citrulline. Aspartate 136 is an ATP binding site. L-citrulline-binding residues include arginine 139 and serine 192. Aspartate 194 is a binding site for ATP. L-citrulline-binding residues include threonine 201, glutamate 203, and glutamate 280.

It belongs to the argininosuccinate synthase family. Type 2 subfamily. In terms of assembly, homotetramer.

It localises to the cytoplasm. It catalyses the reaction L-citrulline + L-aspartate + ATP = 2-(N(omega)-L-arginino)succinate + AMP + diphosphate + H(+). It functions in the pathway amino-acid biosynthesis; L-arginine biosynthesis; L-arginine from L-ornithine and carbamoyl phosphate: step 2/3. The chain is Argininosuccinate synthase from Pectobacterium atrosepticum (strain SCRI 1043 / ATCC BAA-672) (Erwinia carotovora subsp. atroseptica).